The chain runs to 398 residues: Acetate kinase (398 aa).

N7 serves as a coordination point for Mg(2+). K14 lines the ATP pocket. R92 contacts substrate. The active-site Proton donor/acceptor is the D149. Residues 208–212, 283–285, and 331–335 each bind ATP; these read HLGNG, DCR, and GIGEN. E385 contacts Mg(2+).

This sequence belongs to the acetokinase family. Homodimer. Requires Mg(2+) as cofactor. Mn(2+) serves as cofactor.

It localises to the cytoplasm. The enzyme catalyses acetate + ATP = acetyl phosphate + ADP. The protein operates within metabolic intermediate biosynthesis; acetyl-CoA biosynthesis; acetyl-CoA from acetate: step 1/2. In terms of biological role, catalyzes the formation of acetyl phosphate from acetate and ATP. Can also catalyze the reverse reaction. The chain is Acetate kinase from Fusobacterium nucleatum subsp. nucleatum (strain ATCC 25586 / DSM 15643 / BCRC 10681 / CIP 101130 / JCM 8532 / KCTC 2640 / LMG 13131 / VPI 4355).